A 361-amino-acid polypeptide reads, in one-letter code: Cell cycle control protein 50A (361 aa).

Residues 1 to 28 are disordered; sequence MAMNYNAKDEVDGGPPCPPGGTAKTRRP. An N-acetylalanine modification is found at Ala2. The tract at residues 2 to 48 is required for ATPase and aminophospholipid flippase activity; that stretch reads AMNYNAKDEVDGGPPCPPGGTAKTRRPDNTAFKQQRLPAWQPILTAG. The Cytoplasmic segment spans residues 2–49; it reads AMNYNAKDEVDGGPPCPPGGTAKTRRPDNTAFKQQRLPAWQPILTAGT. Residues 49-348 are interaction with ATP8A2; it reads TVLPTFFIIG…LGVVLLVINH (300 aa). The chain crosses the membrane as a helical span at residues 50–70; the sequence is VLPTFFIIGLIFIPIGIGIFV. At 71–325 the chain is on the exoplasmic loop side; that stretch reads TSNNIREIEI…SWMGGKNPFL (255 aa). Intrachain disulfides connect Cys91/Cys104, Cys94/Cys102, and Cys157/Cys171. N-linked (GlcNAc...) asparagine glycans are attached at residues Asn180, Asn190, and Asn294. The helical transmembrane segment at 326–346 threads the bilayer; it reads GIAYITIGSISFLLGVVLLVI. The Cytoplasmic segment spans residues 347–361; the sequence is NHKYRNSSNTADITI.

Belongs to the CDC50/LEM3 family. In terms of assembly, component of various P4-ATPase flippase complexes which consists of a catalytic alpha subunit and an accessory beta subunit. Interacts with ATP8A1 to form a flippase complex; this complex forms an intermediate phosphoenzyme. Interacts with ATP8A2 to form a flippase complex. ATP8B1:TMEM30A and ATP8B2:TMEM30A flippase complexes have been shown to form intermediate phosphoenzymes in vitro. Interacts with alpha subunits ATP8A1, ATP8B1, ATP8B2, ATP8B4, ATP10A, ATP10B, ATP10D, ATP11A, ATP11B and ATP11C. N-glycosylated; contributes to ATP8A2:TMEM30A flippase complex assembly but not to functional activity. As to expression, expressed in photoreceptor cells; detected in retina outer segment and other retinal layers (at protein level).

It localises to the membrane. The protein resides in the golgi apparatus. Its subcellular location is the cytoplasmic vesicle. The protein localises to the secretory vesicle membrane. It is found in the apical cell membrane. It localises to the photoreceptor inner segment. The protein resides in the cell projection. Its subcellular location is the cilium. The protein localises to the photoreceptor outer segment. Its function is as follows. Accessory component of a P4-ATPase flippase complex which catalyzes the hydrolysis of ATP coupled to the transport of aminophospholipids from the outer to the inner leaflet of various membranes and ensures the maintenance of asymmetric distribution of phospholipids. Phospholipid translocation also seems to be implicated in vesicle formation and in uptake of lipid signaling molecules. The beta subunit may assist in binding of the phospholipid substrate. Required for the proper folding, assembly and ER to Golgi exit of the ATP8A2:TMEM30A flippase complex. ATP8A2:TMEM30A may be involved in regulation of neurite outgrowth, and, reconstituted to liposomes, predomiminantly transports phosphatidylserine (PS) and to a lesser extent phosphatidylethanolamine (PE). The ATP8A1:TMEM30A flippase complex seems to play a role in regulation of cell migration probably involving flippase-mediated translocation of phosphatidylethanolamine (PE) at the plasma membrane. Required for the formation of the ATP8A2, ATP8B1 and ATP8B2 P-type ATPAse intermediate phosphoenzymes. Involved in uptake of platelet-activating factor (PAF). Can also mediate the export of alpha subunits ATP8A1, ATP8B1, ATP8B2, ATP8B4, ATP10A, ATP10B, ATP10D, ATP11A, ATP11B and ATP11C from the ER to other membrane localizations. This Bos taurus (Bovine) protein is Cell cycle control protein 50A.